Reading from the N-terminus, the 274-residue chain is 3-methyl-2-oxobutanoate hydroxymethyltransferase (274 aa).

Mg(2+) is bound by residues aspartate 46 and aspartate 85. 3-methyl-2-oxobutanoate is bound by residues 46-47 (DS), aspartate 85, and lysine 115. Position 117 (glutamate 117) interacts with Mg(2+). Catalysis depends on glutamate 184, which acts as the Proton acceptor.

This sequence belongs to the PanB family. Homodecamer; pentamer of dimers. Requires Mg(2+) as cofactor.

Its subcellular location is the cytoplasm. It catalyses the reaction 3-methyl-2-oxobutanoate + (6R)-5,10-methylene-5,6,7,8-tetrahydrofolate + H2O = 2-dehydropantoate + (6S)-5,6,7,8-tetrahydrofolate. Its pathway is cofactor biosynthesis; coenzyme A biosynthesis. Functionally, catalyzes the reversible reaction in which hydroxymethyl group from 5,10-methylenetetrahydrofolate is transferred onto alpha-ketoisovalerate to form ketopantoate. The polypeptide is 3-methyl-2-oxobutanoate hydroxymethyltransferase (Halobacterium salinarum (strain ATCC 29341 / DSM 671 / R1)).